The primary structure comprises 230 residues: Ion-translocating oxidoreductase complex subunit E (230 aa).

6 consecutive transmembrane segments (helical) span residues Gly11–Val31, Leu39–Val59, Ile69–Ala89, Gly93–Gly113, Phe132–Ile152, and Ser182–Leu202.

This sequence belongs to the NqrDE/RnfAE family. As to quaternary structure, the complex is composed of six subunits: RnfA, RnfB, RnfC, RnfD, RnfE and RnfG.

It is found in the cell inner membrane. Its function is as follows. Part of a membrane-bound complex that couples electron transfer with translocation of ions across the membrane. This Vibrio atlanticus (strain LGP32) (Vibrio splendidus (strain Mel32)) protein is Ion-translocating oxidoreductase complex subunit E.